A 399-amino-acid polypeptide reads, in one-letter code: MADTRSRRLFTSESVTEGHPDKICDQISDSILDEILKEDPNARVACETSVTTGLVLVAGEITTSTYVDIPKVVRDTIRNIGYTRAKYGFDSETCAVLTSIDEQSPDIAQGVNQALEAREGQMTDAEIEAIGAGDQGLMFGYANNETPELMPLPISLSHKLARRLSEARKGEILPYLRPDGKTQVTVEYDENDQSVRIDTIVISTQHHPEVTLEQIESDLKQHVIRSVVPEELIDEETKYFINPTGRFVIGGPQGDAGLTGRKIIVDTYGGYARHGGGAFSGKDPTKVDRSGAYAARYVAKNIVAAGLADKCEVQLAYAIGVAKPVSISIDTFGTGQVSEARLVELVREHFDLRPAGIIKMLDLRRPIYKQTAAYGHFGRTDVELPWEQTDKAEILRQQA.

Histidine 19 is an ATP binding site. A Mg(2+)-binding site is contributed by aspartate 21. Position 47 (glutamate 47) interacts with K(+). The L-methionine site is built by glutamate 60 and glutamine 103. Residues 103-113 (QSPDIAQGVNQ) are flexible loop. Residues 179–181 (DGK), 246–247 (RF), aspartate 255, 261–262 (RK), alanine 278, and lysine 282 each bind ATP. Aspartate 255 is an L-methionine binding site. Residue lysine 286 coordinates L-methionine.

It belongs to the AdoMet synthase family. In terms of assembly, homotetramer; dimer of dimers. Mg(2+) serves as cofactor. The cofactor is K(+).

It localises to the cytoplasm. It catalyses the reaction L-methionine + ATP + H2O = S-adenosyl-L-methionine + phosphate + diphosphate. Its pathway is amino-acid biosynthesis; S-adenosyl-L-methionine biosynthesis; S-adenosyl-L-methionine from L-methionine: step 1/1. Functionally, catalyzes the formation of S-adenosylmethionine (AdoMet) from methionine and ATP. The overall synthetic reaction is composed of two sequential steps, AdoMet formation and the subsequent tripolyphosphate hydrolysis which occurs prior to release of AdoMet from the enzyme. The protein is S-adenosylmethionine synthase of Halalkalibacterium halodurans (strain ATCC BAA-125 / DSM 18197 / FERM 7344 / JCM 9153 / C-125) (Bacillus halodurans).